Here is a 151-residue protein sequence, read N- to C-terminus: Neuroglobin (151 aa).

The Globin domain occupies 1–149 (MELPEPELIR…VVQAMSRGWG (149 aa)). The heme b site is built by His64 and His96.

It belongs to the globin family. In terms of assembly, monomer. Homodimer and homotetramer; disulfide-linked. Mainly monomeric but also detected as part of homodimers and homotetramers. Interacts with 14-3-3 proteins; regulates the phosphorylation of NGB. Could interact (ferrous form) with G-alpha(i) proteins (GTP-bound form). Post-translationally, phosphorylated during hypoxia by ERK1/ERK2. Phosphorylation regulates the heme pocket hexacoordination preventing the association of His-64 with the heme metal center. Thereby, promotes the access of dioxygen and nitrite to the heme and stimulates the nitrite reductase activity. Phosphorylation during hypoxia is stabilized by 14-3-3 proteins.

Its subcellular location is the cytoplasm. The protein resides in the cytosol. It localises to the mitochondrion matrix. It carries out the reaction Fe(III)-heme b-[protein] + nitric oxide + H2O = Fe(II)-heme b-[protein] + nitrite + 2 H(+). In terms of biological role, monomeric globin with a bis-histidyl six-coordinate heme-iron atom through which it can bind dioxygen, carbon monoxide and nitric oxide. Could help transport oxygen and increase its availability to the metabolically active neuronal tissues, though its low quantity in tissues as well as its high affinity for dioxygen, which may limit its oxygen-releasing ability, argue against it. The ferrous/deoxygenated form exhibits a nitrite reductase activity and it could produce nitric oxide which in turn inhibits cellular respiration in response to hypoxia. In its ferrous/deoxygenated state, it may also exhibit GDI (Guanine nucleotide Dissociation Inhibitor) activity toward heterotrimeric G-alpha proteins, thereby regulating signal transduction to facilitate neuroprotective responses in the wake of hypoxia and associated oxidative stress. This chain is Neuroglobin, found in Bos taurus (Bovine).